A 169-amino-acid polypeptide reads, in one-letter code: Large ribosomal subunit protein bL19m (169 aa).

The N-terminal 16 residues, 1-16 (MWSRNVRLLGSWTRSY), are a transit peptide targeting the mitochondrion.

It belongs to the bacterial ribosomal protein bL19 family. As to quaternary structure, component of the mitochondrial large ribosomal subunit (mt-LSU). Mature yeast 74S mitochondrial ribosomes consist of a small (37S) and a large (54S) subunit. The 37S small subunit contains a 15S ribosomal RNA (15S mt-rRNA) and 34 different proteins. The 54S large subunit contains a 21S rRNA (21S mt-rRNA) and 46 different proteins.

It localises to the mitochondrion. Component of the mitochondrial ribosome (mitoribosome), a dedicated translation machinery responsible for the synthesis of mitochondrial genome-encoded proteins, including at least some of the essential transmembrane subunits of the mitochondrial respiratory chain. The mitoribosomes are attached to the mitochondrial inner membrane and translation products are cotranslationally integrated into the membrane. bL19m is essential for respiration. The protein is Large ribosomal subunit protein bL19m (IMG1) of Saccharomyces cerevisiae (strain ATCC 204508 / S288c) (Baker's yeast).